A 257-amino-acid polypeptide reads, in one-letter code: Hydroxyethylthiazole kinase 1 (257 aa).

Residue M41 participates in substrate binding. Residues K117 and T162 each coordinate ATP. G189 is a binding site for substrate.

The protein belongs to the Thz kinase family. Requires Mg(2+) as cofactor.

It catalyses the reaction 5-(2-hydroxyethyl)-4-methylthiazole + ATP = 4-methyl-5-(2-phosphooxyethyl)-thiazole + ADP + H(+). It functions in the pathway cofactor biosynthesis; thiamine diphosphate biosynthesis; 4-methyl-5-(2-phosphoethyl)-thiazole from 5-(2-hydroxyethyl)-4-methylthiazole: step 1/1. Functionally, catalyzes the phosphorylation of the hydroxyl group of 4-methyl-5-beta-hydroxyethylthiazole (THZ). The chain is Hydroxyethylthiazole kinase 1 from Oceanobacillus iheyensis (strain DSM 14371 / CIP 107618 / JCM 11309 / KCTC 3954 / HTE831).